Reading from the N-terminus, the 141-residue chain is Large ribosomal subunit protein uL23A (141 aa).

2 positions are modified to phosphoserine: Ser-68 and Ser-70.

The protein belongs to the universal ribosomal protein uL23 family. In terms of assembly, component of the large ribosomal subunit (LSU). Mature yeast ribosomes consist of a small (40S) and a large (60S) subunit. The 40S small subunit contains 1 molecule of ribosomal RNA (18S rRNA) and at least 33 different proteins. The large 60S subunit contains 3 rRNA molecules (25S, 5.8S and 5S rRNA) and at least 46 different proteins. uL23 is associated with the polypeptide exit tunnel.

It localises to the cytoplasm. Its function is as follows. This protein binds to a specific region on the 26S rRNA. Component of the ribosome, a large ribonucleoprotein complex responsible for the synthesis of proteins in the cell. The small ribosomal subunit (SSU) binds messenger RNAs (mRNAs) and translates the encoded message by selecting cognate aminoacyl-transfer RNA (tRNA) molecules. The large subunit (LSU) contains the ribosomal catalytic site termed the peptidyl transferase center (PTC), which catalyzes the formation of peptide bonds, thereby polymerizing the amino acids delivered by tRNAs into a polypeptide chain. The nascent polypeptides leave the ribosome through a tunnel in the LSU and interact with protein factors that function in enzymatic processing, targeting, and the membrane insertion of nascent chains at the exit of the ribosomal tunnel. uL23 is a major component of the universal docking site for these factors at the polypeptide exit tunnel. The polypeptide is Large ribosomal subunit protein uL23A (rpl2501) (Schizosaccharomyces pombe (strain 972 / ATCC 24843) (Fission yeast)).